Reading from the N-terminus, the 308-residue chain is Oxygen-dependent coproporphyrinogen-III oxidase (308 aa).

Substrate is bound at residue Ser100. 2 residues coordinate a divalent metal cation: His104 and His114. His114 functions as the Proton donor in the catalytic mechanism. 116-118 provides a ligand contact to substrate; that stretch reads NFR. A divalent metal cation contacts are provided by His153 and His183. The segment at 248–283 is important for dimerization; that stretch reads YVEFNLVFDRGTIFGLQSGGRTESILSSMPPMASWR. Position 266–268 (266–268) interacts with substrate; it reads GGR.

The protein belongs to the aerobic coproporphyrinogen-III oxidase family. Homodimer. The cofactor is a divalent metal cation.

The protein localises to the cytoplasm. It carries out the reaction coproporphyrinogen III + O2 + 2 H(+) = protoporphyrinogen IX + 2 CO2 + 2 H2O. The protein operates within porphyrin-containing compound metabolism; protoporphyrin-IX biosynthesis; protoporphyrinogen-IX from coproporphyrinogen-III (O2 route): step 1/1. Involved in the heme biosynthesis. Catalyzes the aerobic oxidative decarboxylation of propionate groups of rings A and B of coproporphyrinogen-III to yield the vinyl groups in protoporphyrinogen-IX. This is Oxygen-dependent coproporphyrinogen-III oxidase from Francisella tularensis subsp. novicida (strain U112).